Reading from the N-terminus, the 238-residue chain is Valine-rich protein (238 aa).

Residues 1-16 form the signal peptide; that stretch reads MQAVLLVVALFGAALA.

As to expression, prismatic layer of shell (at protein level). Expressed primarily in the mantle with highest level in the mantle edge and lower level in the mantle pallium.

It is found in the secreted. This is Valine-rich protein from Margaritifera margaritifera (Freshwater pearl mussel).